Here is a 213-residue protein sequence, read N- to C-terminus: ATP-dependent dethiobiotin synthetase BioD (213 aa).

Asn12–Phe17 contacts ATP. Thr16 provides a ligand contact to Mg(2+). Lys36 is an active-site residue. Position 40 (Ser40) interacts with substrate. ATP-binding positions include Asp53, Glu110–Gly113, and Asn170–Gln171. Mg(2+) contacts are provided by Asp53 and Glu110.

This sequence belongs to the dethiobiotin synthetase family. Homodimer. The cofactor is Mg(2+).

It localises to the cytoplasm. It carries out the reaction (7R,8S)-7,8-diammoniononanoate + CO2 + ATP = (4R,5S)-dethiobiotin + ADP + phosphate + 3 H(+). The protein operates within cofactor biosynthesis; biotin biosynthesis; biotin from 7,8-diaminononanoate: step 1/2. Functionally, catalyzes a mechanistically unusual reaction, the ATP-dependent insertion of CO2 between the N7 and N8 nitrogen atoms of 7,8-diaminopelargonic acid (DAPA, also called 7,8-diammoniononanoate) to form a ureido ring. The chain is ATP-dependent dethiobiotin synthetase BioD from Ruthia magnifica subsp. Calyptogena magnifica.